The primary structure comprises 289 residues: Zinc finger matrin-type protein 3 (289 aa).

2 Matrin-type zinc fingers span residues 70 to 100 and 147 to 177; these read LFCK…KLRN and DYCK…RLRL. Disordered regions lie at residues 180–202 and 265–289; these read AQSH…EGSE and ESKQ…GYVQ. The Matrin-type 3 zinc-finger motif lies at 245–275; that stretch reads FYCSMCNVGAGEEVEFRQHLESKQHKSKVSE. A compositionally biased stretch (basic and acidic residues) spans 265-282; the sequence is ESKQHKSKVSEQRYRSEM.

Interacts with dsRNA. In terms of tissue distribution, highly expressed in brain, gut, lung, and testis.

The protein resides in the nucleus. It localises to the nucleolus. Acts as a bona fide target gene of p53/TP53. May play a role in the TP53-dependent growth regulatory pathway. May contribute to TP53-mediated apoptosis by regulation of TP53 expression and translocation to the nucleus and nucleolus. The sequence is that of Zinc finger matrin-type protein 3 from Rattus norvegicus (Rat).